The primary structure comprises 174 residues: Protein GrpE (174 aa).

Positions 1 to 35 are disordered; sequence MAQDIKNEEVEEVQEEEVVKTAEETTPEKSELDLA. Residues 17–35 show a composition bias toward basic and acidic residues; the sequence is EVVKTAEETTPEKSELDLA.

Belongs to the GrpE family. In terms of assembly, homodimer.

The protein resides in the cytoplasm. Participates actively in the response to hyperosmotic and heat shock by preventing the aggregation of stress-denatured proteins, in association with DnaK and GrpE. It is the nucleotide exchange factor for DnaK and may function as a thermosensor. Unfolded proteins bind initially to DnaJ; upon interaction with the DnaJ-bound protein, DnaK hydrolyzes its bound ATP, resulting in the formation of a stable complex. GrpE releases ADP from DnaK; ATP binding to DnaK triggers the release of the substrate protein, thus completing the reaction cycle. Several rounds of ATP-dependent interactions between DnaJ, DnaK and GrpE are required for fully efficient folding. In Streptococcus pneumoniae serotype 4 (strain ATCC BAA-334 / TIGR4), this protein is Protein GrpE.